We begin with the raw amino-acid sequence, 296 residues long: uncharacterized protein (296 aa).

The signal sequence occupies residues 1 to 20 (MKKALGILAILLILVGGYFA).

This is an uncharacterized protein from Aquifex aeolicus (strain VF5).